The chain runs to 192 residues: MKTDEVLGIFREAGAVLEGHFILTSGLRSPVFLQKARVFMHADKTERLCRALAEKIRAAVPGKIDYVVGPAIGGLIPAYETSRHLGVPAIWVEREGGEFRLRRFEIARGARVVIVEDIVTTGLSIRETIECLRELGAEVVAAACIIDRSAGKTHVGVPLIALAEYEVPAYPPDRLPPELAAIPAVKPGSRNI.

Residue 116-124 (EDIVTTGLS) coordinates 5-phospho-alpha-D-ribose 1-diphosphate. Residues T120 and R148 each coordinate orotate.

This sequence belongs to the purine/pyrimidine phosphoribosyltransferase family. PyrE subfamily. In terms of assembly, homodimer. Mg(2+) serves as cofactor.

It catalyses the reaction orotidine 5'-phosphate + diphosphate = orotate + 5-phospho-alpha-D-ribose 1-diphosphate. Its pathway is pyrimidine metabolism; UMP biosynthesis via de novo pathway; UMP from orotate: step 1/2. Functionally, catalyzes the transfer of a ribosyl phosphate group from 5-phosphoribose 1-diphosphate to orotate, leading to the formation of orotidine monophosphate (OMP). This is Orotate phosphoribosyltransferase 2 from Mesorhizobium japonicum (strain LMG 29417 / CECT 9101 / MAFF 303099) (Mesorhizobium loti (strain MAFF 303099)).